The primary structure comprises 103 residues: Large ribosomal subunit protein bL21 (103 aa).

The protein belongs to the bacterial ribosomal protein bL21 family. In terms of assembly, part of the 50S ribosomal subunit. Contacts protein L20.

Its function is as follows. This protein binds to 23S rRNA in the presence of protein L20. In Chromobacterium violaceum (strain ATCC 12472 / DSM 30191 / JCM 1249 / CCUG 213 / NBRC 12614 / NCIMB 9131 / NCTC 9757 / MK), this protein is Large ribosomal subunit protein bL21.